Consider the following 1105-residue polypeptide: SWI/SNF complex subunit SMARCC1 (1105 aa).

Ala-2 carries the N-acetylalanine modification. Residues 28–302 form a marR-like, BRCT and chromo domains module region; it reads LAVYRRKDGG…PVSFRQRIST (275 aa). The MarR-like domain maps to 38-164; the sequence is PATKFWESPE…IEKTLVQNNC (127 aa). A BRCT; N-terminus domain is found at 168-211; sequence PNIYLIPDIDLKLANKLKDIIKRHQGTFTDEKSKASHHIYPYSS. Residue Lys-179 forms a Glycyl lysine isopeptide (Lys-Gly) (interchain with G-Cter in SUMO2) linkage. Positions 217–245 constitute a Chromo domain; the sequence is EWLRPVMRKEKQVLVHWGFYPDSYDTWVH. The 25-residue stretch at 261–285 folds into the BRCT; C-terminus domain; it reads KPWKVHVKWILDTDIFNEWMNEEDY. The segment at 296–439 is disordered; the sequence is FRQRISTKNE…DQSRSVDLGE (144 aa). The span at 302-318 shows a compositional bias: basic and acidic residues; sequence TKNEEPVRSPERRDRKA. A phosphoserine mark is found at Ser-310, Ser-328, and Ser-330. Thr-335 carries the post-translational modification Phosphothreonine. An N6-acetyllysine mark is found at Lys-345 and Lys-346. Ser-350 bears the Phosphoserine mark. Residue Lys-354 is modified to N6-acetyllysine. Ser-357 carries the post-translational modification Phosphoserine. Lys-359 bears the N6-acetyllysine; alternate mark. Residue Lys-359 forms a Glycyl lysine isopeptide (Lys-Gly) (interchain with G-Cter in SUMO2); alternate linkage. The residue at position 398 (Thr-398) is a Phosphothreonine. The region spanning 449-546 is the SWIRM domain; the sequence is IIIPSYASWF…YQVDPESRPM (98 aa). Ser-573 is modified (phosphoserine). Residue Lys-592 forms a Glycyl lysine isopeptide (Lys-Gly) (interchain with G-Cter in SUMO2) linkage. One can recognise an SANT domain in the interval 618-669; sequence SAGREWTEQETLLLLEALEMYKDDWNKVSEHVGSRTQDECILHFLRLPIEDP. Lys-739 participates in a covalent cross-link: Glycyl lysine isopeptide (Lys-Gly) (interchain with G-Cter in SUMO2). Residues 745 to 860 form a disordered region; the sequence is ARASGKVDPT…DTGKKKVEHE (116 aa). The span at 776–785 shows a compositional bias: acidic residues; that stretch reads AEEEKMEADP. Over residues 789–860 the composition is skewed to basic and acidic residues; it reads QPEKAENKVE…DTGKKKVEHE (72 aa). Lys-796 participates in a covalent cross-link: Glycyl lysine isopeptide (Lys-Gly) (interchain with G-Cter in SUMO2). 2 positions are modified to phosphoserine: Ser-822 and Ser-825. Glycyl lysine isopeptide (Lys-Gly) (interchain with G-Cter in SUMO2) cross-links involve residues Lys-829 and Lys-856. Residues 914 to 946 adopt a coiled-coil conformation; the sequence is FEELETIMDREKEALEQQRQQLLTERQNFHMEQ. An N6-acetyllysine modification is found at Lys-948. 2 disordered regions span residues 956-1028 and 1041-1105; these read QQME…PGQH and IHPS…SAAP. Over residues 957–993 the composition is skewed to low complexity; that stretch reads QMEQQQHGQNPQQAHQHSGGPGLAPLGAAGHPGMMPH. Composition is skewed to pro residues over residues 994–1017 and 1048–1057; these read QQPP…PGQI and PTPPGMPPMP. At Arg-1064 the chain carries Asymmetric dimethylarginine. A compositionally biased stretch (pro residues) spans 1073–1105; sequence MYPPPPQQQPPPPPPADGVPPPPAPGPPASAAP.

The protein belongs to the SMARCC family. Component of the multiprotein chromatin-remodeling complexes SWI/SNF: SWI/SNF-A (BAF), SWI/SNF-B (PBAF) and related complexes. The canonical complex contains a catalytic subunit (either SMARCA4/BRG1/BAF190A or SMARCA2/BRM/BAF190B) and at least SMARCE1, ACTL6A/BAF53, SMARCC1/BAF155, SMARCC2/BAF170, and SMARCB1/SNF5/BAF47. Other subunits specific to each of the complexes may also be present permitting several possible combinations developmentally and tissue specific. Component of the BAF complex, which includes at least actin (ACTB), ARID1A/BAF250A, ARID1B/BAF250B, SMARCA2/BRM, SMARCA4/BRG1, ACTL6A/BAF53, ACTL6B/BAF53B, SMARCE1/BAF57, SMARCC1/BAF155, SMARCC2/BAF170, SMARCB1/SNF5/INI1, and one or more SMARCD1/BAF60A, SMARCD2/BAF60B, or SMARCD3/BAF60C. In muscle cells, the BAF complex also contains DPF3. Component of neural progenitors-specific chromatin remodeling complex (npBAF complex) composed of at least, ARID1A/BAF250A or ARID1B/BAF250B, SMARCD1/BAF60A, SMARCD3/BAF60C, SMARCA2/BRM/BAF190B, SMARCA4/BRG1/BAF190A, SMARCB1/BAF47, SMARCC1/BAF155, SMARCE1/BAF57, SMARCC2/BAF170, PHF10/BAF45A, ACTL6A/BAF53A and actin. Component of neuron-specific chromatin remodeling complex (nBAF complex) composed of at least, ARID1A/BAF250A or ARID1B/BAF250B, SMARCD1/BAF60A, SMARCD3/BAF60C, SMARCA2/BRM/BAF190B, SMARCA4/BRG1/BAF190A, SMARCB1/BAF47, SMARCC1/BAF155, SMARCE1/BAF57, SMARCC2/BAF170, DPF1/BAF45B, DPF3/BAF45C, ACTL6B/BAF53B and actin. Component of the SWI/SNF-B (PBAF) chromatin remodeling complex, at least composed of SMARCA4/BRG1, SMARCB1/BAF47/SNF5, ACTL6A/BAF53A or ACTL6B/BAF53B, SMARCE1/BAF57, SMARCD1/BAF60A, SMARCD2/BAF60B, perhaps SMARCD3/BAF60C, SMARCC1/BAF155, SMARCC2/BAF170, PBRM1/BAF180, ARID2/BAF200 and actin. Component of SWI/SNF (GBAF) subcomplex, which includes at least BICRA or BICRAL (mutually exclusive), BRD9, SS18, SMARCA2/BRM, SMARCA4/BRG1/BAF190A, ACTL6A/BAF53, SMARCC1/BAF155, and SMARCD1/BAF60A. May also interact with the SIN3A histone deacetylase transcription repressor complex in conjunction with SMARCA2 and SMARCA4. The minimal complex composed of SMARCC1 and SMARCA4 seems to be able to associate with cyclin such as CCNE1 or transcription factors such as KLF1 or GATA1. Interacts with NR3C1 and SMARD1. Interacts with TRIP12; leading to disrupt interaction between TRIP12 and SMARCE1 and prevent SMARCE1 ubiquitination. Interacts with CEBPB (when not methylated). Interacts with KDM6B. Interacts with MKKS; the interaction takes place predominantly in the cytoplasm and may modulate SMARCC1 location. Interacts with DPF2. Interacts with PRDM1/BLIMP1. Interacts with DPF3a (isoform 2 of DPF3/BAF45C) and with HDGFL2 in a DPF3a-dependent manner. Phosphorylated on undefined residues at the G2/M transition by ERK1 and other kinases. This may contribute to cell cycle specific inactivation of remodeling complexes containing the phosphorylated protein. Expressed in brain, heart, muscle, placenta, lung, liver, muscle, kidney and pancreas.

Its subcellular location is the nucleus. It localises to the cytoplasm. Its function is as follows. Involved in transcriptional activation and repression of select genes by chromatin remodeling (alteration of DNA-nucleosome topology). Component of SWI/SNF chromatin remodeling complexes that carry out key enzymatic activities, changing chromatin structure by altering DNA-histone contacts within a nucleosome in an ATP-dependent manner. May stimulate the ATPase activity of the catalytic subunit of the complex. Belongs to the neural progenitors-specific chromatin remodeling complex (npBAF complex) and the neuron-specific chromatin remodeling complex (nBAF complex). During neural development a switch from a stem/progenitor to a postmitotic chromatin remodeling mechanism occurs as neurons exit the cell cycle and become committed to their adult state. The transition from proliferating neural stem/progenitor cells to postmitotic neurons requires a switch in subunit composition of the npBAF and nBAF complexes. As neural progenitors exit mitosis and differentiate into neurons, npBAF complexes which contain ACTL6A/BAF53A and PHF10/BAF45A, are exchanged for homologous alternative ACTL6B/BAF53B and DPF1/BAF45B or DPF3/BAF45C subunits in neuron-specific complexes (nBAF). The npBAF complex is essential for the self-renewal/proliferative capacity of the multipotent neural stem cells. The nBAF complex along with CREST plays a role regulating the activity of genes essential for dendrite growth. The sequence is that of SWI/SNF complex subunit SMARCC1 from Homo sapiens (Human).